Here is a 136-residue protein sequence, read N- to C-terminus: NADPH-dependent 7-cyano-7-deazaguanine reductase (136 aa).

Cys-50 acts as the Thioimide intermediate in catalysis. Catalysis depends on Asp-57, which acts as the Proton donor. Substrate-binding positions include 72–74 and 91–92; these read YEL and HE.

Belongs to the GTP cyclohydrolase I family. QueF type 1 subfamily.

The protein localises to the cytoplasm. It catalyses the reaction 7-aminomethyl-7-carbaguanine + 2 NADP(+) = 7-cyano-7-deazaguanine + 2 NADPH + 3 H(+). It functions in the pathway tRNA modification; tRNA-queuosine biosynthesis. Functionally, catalyzes the NADPH-dependent reduction of 7-cyano-7-deazaguanine (preQ0) to 7-aminomethyl-7-deazaguanine (preQ1). The polypeptide is NADPH-dependent 7-cyano-7-deazaguanine reductase (Prochlorococcus marinus (strain MIT 9215)).